Reading from the N-terminus, the 29-residue chain is Cytochrome b6-f complex subunit 8 (29 aa).

A helical transmembrane segment spans residues 3–23; sequence ILTLGWVSILALFTWSIAMVV.

Belongs to the PetN family. In terms of assembly, the 4 large subunits of the cytochrome b6-f complex are cytochrome b6, subunit IV (17 kDa polypeptide, PetD), cytochrome f and the Rieske protein, while the 4 small subunits are PetG, PetL, PetM and PetN. The complex functions as a dimer.

The protein localises to the cellular thylakoid membrane. Component of the cytochrome b6-f complex, which mediates electron transfer between photosystem II (PSII) and photosystem I (PSI), cyclic electron flow around PSI, and state transitions. This is Cytochrome b6-f complex subunit 8 from Microcystis aeruginosa (strain NIES-843 / IAM M-2473).